The sequence spans 73 residues: Translation initiation factor IF-1 (73 aa).

Positions Met1 to Lys73 constitute an S1-like domain.

This sequence belongs to the IF-1 family. In terms of assembly, component of the 30S ribosomal translation pre-initiation complex which assembles on the 30S ribosome in the order IF-2 and IF-3, IF-1 and N-formylmethionyl-tRNA(fMet); mRNA recruitment can occur at any time during PIC assembly.

The protein resides in the cytoplasm. One of the essential components for the initiation of protein synthesis. Stabilizes the binding of IF-2 and IF-3 on the 30S subunit to which N-formylmethionyl-tRNA(fMet) subsequently binds. Helps modulate mRNA selection, yielding the 30S pre-initiation complex (PIC). Upon addition of the 50S ribosomal subunit IF-1, IF-2 and IF-3 are released leaving the mature 70S translation initiation complex. In Arthrobacter sp. (strain FB24), this protein is Translation initiation factor IF-1.